Reading from the N-terminus, the 449-residue chain is MDRVYEIPEEPNVVPISSLEEDVIRGPNPRFTFPFSILFSTFLYCGEAASALYMVRIYRKNNETFWMTYTFSFFMFSSIMVQLTLIFVHRDLAKDRPLSLFMHLILLGPVIRCLEAMIKYLTLWKKEGQEEPYVSLTRKKMLIAGQEVLIEWEVGHSIRTLAMHRNAYKRMSQIQAFLGSVPQLTYQLYVSLISAEVPLGRAVLMAFSLISVTYGATLCNMLAIQIKYDDYKIRLGPLEVLCITVWRTLEITSRLVILVLFSATLKLKAVPFLVLNFLIILFEPWVKFWRSGAQMPNNIEKNFSRVGTLVVLISVTILYAGINFSCWSAMQLKLADRDLVDKGQNWGHMGLHYSVRLVENVIMVLVFKYFGVKVLLNYCHSLIAVQLIIAYLISIGVMLLFFQYLHPLRSLFTNNVVDYLHCICCRRPRPERVENSETSCEADTTQSIV.

10 helical membrane passes run 35-55, 68-88, 98-118, 174-194, 204-224, 241-261, 269-289, 306-326, 357-377, and 382-402; these read FSIL…LYMV, TYTF…LIFV, LSLF…EAMI, IQAF…SLIS, LMAF…MLAI, LCIT…LVLF, AVPF…VKFW, VGTL…NFSC, LVEN…VLLN, and LIAV…LLFF.

This sequence belongs to the XK family.

It localises to the membrane. In Mus musculus (Mouse), this protein is XK-related protein 2 (Xkrx).